The primary structure comprises 663 residues: MTNTGETKVIESHGTIKKIDSLSTMPYCGVETDENAVVEEKITLESGKSWSPKHYELLHERIERLIDEKQQFFSLEFFPPRFVNGVPNFLERVERLSEGGSVFVDMTWHMGSDPANVDKVTSSSSIAASMLDYCGVDTMLHMTCVQYNKADTLKHLEQAKAMGLRSILALRGDLPPGTELEDTHQFRALDMIRWIREEYGNYFSIGCAGYPLGHPQAPSYKADLMYLKAKCDAGANFVITQLFFEAETFEKFVRDCREIGITQPIIPGIMPIMGYESIKRIAKLSQLEIPQHILDDLEPIKHDDDAVQKYGTERCIEMCRRLLDNGTAPSIHLYTMNREGSIREILKSLGLWKLEGDRVFPWKNRSQHPIRCLESVRPIYWSFRPRSYITRTRDWDQFPNGRWGNSSSPAFGDVSSYYLSNLTTVRNADDRLAMFGANIESFEDVKRVFINYITQAPNADGVKVTVLPWTEAETGVQPETSLISEQLVWCNENGILTVNSQPSVNGAPSTDPLVGWGKPGGYCYQKAYLECFMTAELSDKLIQIIEREFPVRVNYHAINKDSTFDKTNSEETTPIAVTWGVFPGSEIAQPTVVDPLSFRAWRDEAYQMWMAQWGDFYPKESKSYGVIKAVHDEFRLVTLVDNDFQKPSVLFDVLQKALDELKK.

E76 acts as the Proton donor/acceptor in catalysis. NAD(+) is bound by residues 76–81 and 107–108; these read EFFPPR and TW. T107 is modified (phosphothreonine). Residues 107 to 108, H141, 171 to 173, 187 to 188, Y210, 214 to 217, D223, and K230 each bind FAD; these read TW, RGD, RA, and HPQA. D173 provides a ligand contact to substrate. Q241, Y334, and R338 together coordinate substrate. S408 bears the Phosphoserine mark. Position 465 is a phosphothreonine (T465). S-adenosyl-L-methionine-binding positions include 477-480, 497-501, T578, and T591; these read QPET and TVNSQ.

Belongs to the methylenetetrahydrofolate reductase family. It depends on FAD as a cofactor.

The catalysed reaction is (6S)-5-methyl-5,6,7,8-tetrahydrofolate + NADP(+) = (6R)-5,10-methylene-5,6,7,8-tetrahydrofolate + NADPH + H(+). Its pathway is one-carbon metabolism; tetrahydrofolate interconversion. The sequence is that of Probable methylenetetrahydrofolate reductase (NADPH) from Caenorhabditis elegans.